Here is a 201-residue protein sequence, read N- to C-terminus: Superoxide dismutase [Fe] (201 aa).

Fe cation contacts are provided by histidine 27, histidine 79, aspartate 161, and histidine 165.

Belongs to the iron/manganese superoxide dismutase family. In terms of assembly, homodimer. It depends on Fe cation as a cofactor.

The catalysed reaction is 2 superoxide + 2 H(+) = H2O2 + O2. Its function is as follows. Destroys superoxide anion radicals which are normally produced within the cells and which are toxic to biological systems. This is Superoxide dismutase [Fe] (sodB) from Synechococcus elongatus (strain ATCC 33912 / PCC 7942 / FACHB-805) (Anacystis nidulans R2).